The sequence spans 208 residues: Holliday junction branch migration complex subunit RuvA (208 aa).

A domain I region spans residues 1–64; it reads MIGRLHGTVA…DDGQALYGFA (64 aa). The domain II stretch occupies residues 65–143; sequence SRAERDLFRV…GLLPAASGGV (79 aa). Residues 139-162 form a disordered region; the sequence is ASGGVPARTGSGEQLDAPAGPQGS. Residues 144–157 are flexible linker; the sequence is PARTGSGEQLDAPA. The segment at 158–208 is domain III; it reads GPQGSREDAVSALVALGYKPAEAGRLVNAVPGANDLPSEELIRRALQAAVR.

Belongs to the RuvA family. Homotetramer. Forms an RuvA(8)-RuvB(12)-Holliday junction (HJ) complex. HJ DNA is sandwiched between 2 RuvA tetramers; dsDNA enters through RuvA and exits via RuvB. An RuvB hexamer assembles on each DNA strand where it exits the tetramer. Each RuvB hexamer is contacted by two RuvA subunits (via domain III) on 2 adjacent RuvB subunits; this complex drives branch migration. In the full resolvosome a probable DNA-RuvA(4)-RuvB(12)-RuvC(2) complex forms which resolves the HJ.

It is found in the cytoplasm. Functionally, the RuvA-RuvB-RuvC complex processes Holliday junction (HJ) DNA during genetic recombination and DNA repair, while the RuvA-RuvB complex plays an important role in the rescue of blocked DNA replication forks via replication fork reversal (RFR). RuvA specifically binds to HJ cruciform DNA, conferring on it an open structure. The RuvB hexamer acts as an ATP-dependent pump, pulling dsDNA into and through the RuvAB complex. HJ branch migration allows RuvC to scan DNA until it finds its consensus sequence, where it cleaves and resolves the cruciform DNA. The polypeptide is Holliday junction branch migration complex subunit RuvA (Alkalilimnicola ehrlichii (strain ATCC BAA-1101 / DSM 17681 / MLHE-1)).